The sequence spans 360 residues: Glycoprotein-N-acetylgalactosamine 3-beta-galactosyltransferase 1 (360 aa).

The Cytoplasmic portion of the chain corresponds to 1–7; sequence MSIICAK. A helical; Signal-anchor for type II membrane protein membrane pass occupies residues 8-28; sequence VAWLPLTLGTAMGFLITFYLA. At 29 to 360 the chain is on the lumenal side; it reads RTLLERNSQP…SDFLEPPMES (332 aa). A disulfide bond links C79 and C103. Residues M82, E126, G127, R128, and K134 each contribute to the UDP site. N148 carries N-linked (GlcNAc...) asparagine glycosylation. D157 serves as a coordination point for UDP. Mn(2+) is bound by residues D157 and D159. N173 carries N-linked (GlcNAc...) asparagine glycosylation. A disulfide bond links C220 and C234. Residue W274 participates in a glycoprotein binding. An intrachain disulfide couples C289 to C290. Residues H298 and Y299 each coordinate UDP. Mn(2+) is bound at residue H298. N-linked (GlcNAc...) asparagine glycosylation is found at N341 and N347.

Belongs to the glycosyltransferase 31 family. Beta3-Gal-T subfamily. Homodimer; disulfide-linked. The cofactor is Mn(2+).

The protein resides in the membrane. The catalysed reaction is an N-acetyl-alpha-D-galactosaminyl derivative + UDP-alpha-D-galactose = a beta-D-galactosyl-(1-&gt;3)-N-acetyl-alpha-D-galactosaminyl derivative + UDP + H(+). It functions in the pathway protein modification; protein glycosylation. Its function is as follows. Glycosyltransferase that generates the core 1 O-glycan Gal-beta1-3GalNAc-alpha1-Ser/Thr (T antigen), which is a precursor for many extended O-glycans in glycoproteins. The protein is Glycoprotein-N-acetylgalactosamine 3-beta-galactosyltransferase 1 (c1galt1) of Xenopus laevis (African clawed frog).